The chain runs to 223 residues: Endonuclease V (223 aa).

Residues Asp-35 and Asp-103 each contribute to the Mg(2+) site.

Belongs to the endonuclease V family. Mg(2+) serves as cofactor.

It localises to the cytoplasm. It catalyses the reaction Endonucleolytic cleavage at apurinic or apyrimidinic sites to products with a 5'-phosphate.. Functionally, DNA repair enzyme involved in the repair of deaminated bases. Selectively cleaves double-stranded DNA at the second phosphodiester bond 3' to a deoxyinosine leaving behind the intact lesion on the nicked DNA. The sequence is that of Endonuclease V from Escherichia coli O139:H28 (strain E24377A / ETEC).